A 226-amino-acid polypeptide reads, in one-letter code: Phosphoribosyl-dephospho-CoA transferase (226 aa).

Catalysis depends on residues aspartate 148 and aspartate 150.

Belongs to the MdcG family.

The catalysed reaction is apo-[malonate decarboxylase ACP] + 2'-(5''-triphospho-alpha-D-ribosyl)-3'-dephospho-CoA = holo-[malonate decarboxylase ACP] + diphosphate. Functionally, transfers 2'-(5-triphosphoribosyl)-3'-dephosphocoenzyme-A to the apo-[acyl-carrier-protein] of the malonate decarboxylase to yield holo-[acyl-carrier-protein]. This chain is Phosphoribosyl-dephospho-CoA transferase, found in Bradyrhizobium diazoefficiens (strain JCM 10833 / BCRC 13528 / IAM 13628 / NBRC 14792 / USDA 110).